Reading from the N-terminus, the 378-residue chain is MEVKARAPGKIILAGEHAVVHGSTAVAAAIDLYTYVTLRFPLPSAENNDRLTLQLKDISLEFSWSLARIKEAIPYDSSTLCRSTPASCSEETLKSIAVLVEEQNLPKEKMWLSSGISTFLWLYTRIIGFNPATVVINSELPYGSGLGSSAALCVALTAALLASSISEKTRGNGWSSLDETNLELLNKWAFEGEKIIHGKPSGIDNTVSAYGNMIKFCSGEITRLQSNMPLRMLITNTRVGRNTKALVSGVSQRAVRHPDAMKSVFNAVDSISKELAAIIQSKDETSVTEKEERIKELMEMNQGLLLSMGVSHSSIEAVILTTVKHKLVSKLTGAGGGGCVLTLLPTGTVVDKVVEELESSGFQCFTALIGGNGAQICY.

ATP-binding positions include Lys10, Ser138, and 143 to 149 (GSGLGSS). Mg(2+)-binding residues include Ser149 and Glu193. The active-site Proton acceptor is the Asp204.

Belongs to the GHMP kinase family. Mevalonate kinase subfamily. Mg(2+) serves as cofactor.

It is found in the cytoplasm. It carries out the reaction (R)-mevalonate + ATP = (R)-5-phosphomevalonate + ADP + H(+). Its pathway is isoprenoid biosynthesis; isopentenyl diphosphate biosynthesis via mevalonate pathway; isopentenyl diphosphate from (R)-mevalonate: step 1/3. Its activity is regulated as follows. Its activity is inhibited in vitro by geranyl pyrophosphate (GPP) and farnesyl pyrophosphate (FPP) that bind competitively at the ATP-binding site on the enzyme. Catalyzes the phosphorylation of mevalonate to mevalonate 5-phosphate, a key step in isoprenoid and cholesterol biosynthesis. The polypeptide is Mevalonate kinase (Arabidopsis thaliana (Mouse-ear cress)).